A 392-amino-acid polypeptide reads, in one-letter code: Cell division protein FtsZ (392 aa).

GTP-binding positions include 24-28, 111-113, glutamate 142, arginine 145, and aspartate 189; these read GGGCN and GTG.

The protein belongs to the FtsZ family. In terms of assembly, homodimer. Polymerizes to form a dynamic ring structure in a strictly GTP-dependent manner. Interacts directly with several other division proteins.

It localises to the cytoplasm. Its function is as follows. Essential cell division protein that forms a contractile ring structure (Z ring) at the future cell division site. The regulation of the ring assembly controls the timing and the location of cell division. One of the functions of the FtsZ ring is to recruit other cell division proteins to the septum to produce a new cell wall between the dividing cells. Binds GTP and shows GTPase activity. This is Cell division protein FtsZ from Neisseria gonorrhoeae.